Here is a 252-residue protein sequence, read N- to C-terminus: ELH type 2 (252 aa).

A signal peptide spans 1–19 (AISLLMCLILSALCASSES). 3 propeptides span residues 20-75 (AVVH…VNNE), 92-130 (PQEVSGLKPVMMSRASASADENSLFDLYNTDGAMYQREL), and 144-185 (AAGD…SGIA). Basic and acidic residues predominate over residues 145–161 (AGDEDKAEEHNPETESH). Residues 145–171 (AGDEDKAEEHNPETESHSRRKRSALTP) form a disordered region. Residue Lys-222 is modified to Lysine amide.

The protein belongs to the molluscan ELH family. As to expression, bag cell neurons.

It localises to the secreted. Functionally, ELH acts as a neurotransmitter locally, upon neurons of the abdominal ganglion and as a hormone by diffusing into the circulating hemolymph and modulating the activity of other organs. It specifically causes contraction of smooth muscle in the ovotestis and expulsion of the egg string. Alpha-BCP decreases the activity of a cluster of neurons in the left upper quadrant of the abdominal ganglion. In terms of biological role, beta-BCP specifically excites 2 neurons, L1 and R1, in the abdominal ganglion. The sequence is that of ELH type 2 (ELH2) from Aplysia parvula (Dwarf sea hare).